A 615-amino-acid polypeptide reads, in one-letter code: DNA mismatch repair protein MutL (615 aa).

This sequence belongs to the DNA mismatch repair MutL/HexB family.

Its function is as follows. This protein is involved in the repair of mismatches in DNA. It is required for dam-dependent methyl-directed DNA mismatch repair. May act as a 'molecular matchmaker', a protein that promotes the formation of a stable complex between two or more DNA-binding proteins in an ATP-dependent manner without itself being part of a final effector complex. This is DNA mismatch repair protein MutL from Histophilus somni (strain 2336) (Haemophilus somnus).